The primary structure comprises 685 residues: Polyphosphate kinase (685 aa).

An ATP-binding site is contributed by Asn-45. The Mg(2+) site is built by Arg-375 and Arg-405. Catalysis depends on His-435, which acts as the Phosphohistidine intermediate. Positions 468, 564, and 592 each coordinate ATP.

Belongs to the polyphosphate kinase 1 (PPK1) family. The cofactor is Mg(2+). In terms of processing, an intermediate of this reaction is the autophosphorylated ppk in which a phosphate is covalently linked to a histidine residue through a N-P bond.

The catalysed reaction is [phosphate](n) + ATP = [phosphate](n+1) + ADP. Functionally, catalyzes the reversible transfer of the terminal phosphate of ATP to form a long-chain polyphosphate (polyP). In Neisseria meningitidis serogroup B (strain ATCC BAA-335 / MC58), this protein is Polyphosphate kinase.